A 469-amino-acid polypeptide reads, in one-letter code: MIPRIMSTQHPDNYSIPFFASSPILGGEDEITEAFYAFSVLGADEQMWDFEGKEVDEFVVKKLLERYPTFFKENILGEDLRLTPRVPNPSVEKAEAKLLLETLQGITRAADYARVFYLDNIAPIFEVILPMTTSLAEMLRVHELYRKIVSLSGEVIYDVTVKEWIGEFYPKEINVIPLFETKVALLKSGRIIREYIGRKRPEYLRVFFARSDPAMNYGLLSAVTYVKKALEQVGEVEEETSTPIYPIIGVGSPPFRGGMRPENVKKVLKEYPSVQTYTIQSSFKYDHPTKDVVKAVEIVKSKKREAPDPLDIPEFIQLYEIEYQKQLKILAPYIRNIVTRIPDRRKRKLHIGLFGYSRNVGGLSLPRVIKFTASLYSIGLPPELLGLNELSDNQLDSISEYYKNLYDDLEFAMRFFSFKVAERVGLRELSEKVKEFKPDIDDEYVREAELVFRGQGDVMKLAQIRGFLG.

Belongs to the PEPCase type 2 family. As to quaternary structure, homotetramer. Requires Mg(2+) as cofactor.

It carries out the reaction oxaloacetate + phosphate = phosphoenolpyruvate + hydrogencarbonate. Catalyzes the irreversible beta-carboxylation of phosphoenolpyruvate (PEP) to form oxaloacetate (OAA), a four-carbon dicarboxylic acid source for the tricarboxylic acid cycle. The sequence is that of Phosphoenolpyruvate carboxylase from Pyrococcus horikoshii (strain ATCC 700860 / DSM 12428 / JCM 9974 / NBRC 100139 / OT-3).